Here is a 112-residue protein sequence, read N- to C-terminus: Frizzy aggregation protein FrzB (112 aa).

In terms of biological role, necessary for proper aggregation of cells to form fruiting bodies. FRZ genes define a system of signal transduction analogous to the enterobacterial chemotaxis systems. In Myxococcus xanthus, this protein is Frizzy aggregation protein FrzB (frzB).